A 268-amino-acid chain; its full sequence is Tryptophan synthase alpha chain (268 aa).

Catalysis depends on proton acceptor residues E49 and D60.

Belongs to the TrpA family. Tetramer of two alpha and two beta chains.

It catalyses the reaction (1S,2R)-1-C-(indol-3-yl)glycerol 3-phosphate + L-serine = D-glyceraldehyde 3-phosphate + L-tryptophan + H2O. It functions in the pathway amino-acid biosynthesis; L-tryptophan biosynthesis; L-tryptophan from chorismate: step 5/5. In terms of biological role, the alpha subunit is responsible for the aldol cleavage of indoleglycerol phosphate to indole and glyceraldehyde 3-phosphate. The sequence is that of Tryptophan synthase alpha chain from Serratia proteamaculans (strain 568).